A 129-amino-acid chain; its full sequence is Lysozyme C (129 aa).

The 129-residue stretch at 1–129 folds into the C-type lysozyme domain; that stretch reads KVYGRCELAA…VNAWIRGCRL (129 aa). Disulfide bonds link Cys6–Cys127, Cys30–Cys115, Cys64–Cys80, and Cys76–Cys94. Residues Glu35 and Asp52 contribute to the active site.

The protein belongs to the glycosyl hydrolase 22 family. As to quaternary structure, monomer.

Its subcellular location is the secreted. The catalysed reaction is Hydrolysis of (1-&gt;4)-beta-linkages between N-acetylmuramic acid and N-acetyl-D-glucosamine residues in a peptidoglycan and between N-acetyl-D-glucosamine residues in chitodextrins.. Lysozymes have primarily a bacteriolytic function; those in tissues and body fluids are associated with the monocyte-macrophage system and enhance the activity of immunoagents. This Syrmaticus reevesii (Reeves's pheasant) protein is Lysozyme C (LYZ).